A 302-amino-acid polypeptide reads, in one-letter code: N-acetylmuramic acid 6-phosphate etherase (302 aa).

The 164-residue stretch at I58–K221 folds into the SIS domain. Residue E86 is the Proton donor of the active site. The active site involves E117.

The protein belongs to the GCKR-like family. MurNAc-6-P etherase subfamily. As to quaternary structure, homodimer.

The enzyme catalyses N-acetyl-D-muramate 6-phosphate + H2O = N-acetyl-D-glucosamine 6-phosphate + (R)-lactate. It functions in the pathway amino-sugar metabolism; N-acetylmuramate degradation. In terms of biological role, specifically catalyzes the cleavage of the D-lactyl ether substituent of MurNAc 6-phosphate, producing GlcNAc 6-phosphate and D-lactate. The polypeptide is N-acetylmuramic acid 6-phosphate etherase (Mycoplasma mycoides subsp. mycoides SC (strain CCUG 32753 / NCTC 10114 / PG1)).